A 35-amino-acid polypeptide reads, in one-letter code: Potassium channel toxin alpha-KTx 6.12 (35 aa).

Gln1 is modified (pyrrolidone carboxylic acid). 4 disulfides stabilise this stretch: Cys4–Cys24, Cys10–Cys29, Cys14–Cys31, and Cys19–Cys34. Lys35 is modified (lysine amide).

The protein belongs to the short scorpion toxin superfamily. Potassium channel inhibitor family. Alpha-KTx 06 subfamily. Monomer. As to expression, expressed by the venom gland.

Its subcellular location is the secreted. Functionally, high affinity blocker of Kv1.3/KCNA3 channels of human T cells. Blocks Kv1.2/KCNA2 with an order of magnitude smaller than for Kv1.3/KCNA3. In Anuroctonus phaiodactylus (Mafia scorpion), this protein is Potassium channel toxin alpha-KTx 6.12.